We begin with the raw amino-acid sequence, 105 residues long: Thiosulfate sulfurtransferase GlpE (105 aa).

The 89-residue stretch at 16-104 (DKEDVVIADI…WEAAYSEKVE (89 aa)) folds into the Rhodanese domain. C64 (cysteine persulfide intermediate) is an active-site residue.

It belongs to the GlpE family.

The protein resides in the cytoplasm. The catalysed reaction is thiosulfate + hydrogen cyanide = thiocyanate + sulfite + 2 H(+). The enzyme catalyses thiosulfate + [thioredoxin]-dithiol = [thioredoxin]-disulfide + hydrogen sulfide + sulfite + 2 H(+). Transferase that catalyzes the transfer of sulfur from thiosulfate to thiophilic acceptors such as cyanide or dithiols. May function in a CysM-independent thiosulfate assimilation pathway by catalyzing the conversion of thiosulfate to sulfite, which can then be used for L-cysteine biosynthesis. In Pseudoalteromonas translucida (strain TAC 125), this protein is Thiosulfate sulfurtransferase GlpE.